The primary structure comprises 263 residues: MPLTPSSTRGIPETGAIPKHIAIIMDGNGRWARKRFLPRIAGHTQGVEAVRGTIKACIERGVSHLTIFAFSSENWRRPAEEVKLLMQLFLAALEREVTGLHENGVRFRVIGDISKFDPKIVDFVQQGEALTAGNSRLNFTVAANYGGRWDIMQAVRKMITENPDSAVTFDEPDIARHLALADAPEPDLFIRTGGECRISNFLLWQLAYTELYFTDTLWPDFDASALDEAIASYRKRERRFGRTSEQIAGQQENKNTVSNEDRV.

Asp26 is a catalytic residue. Asp26 contacts Mg(2+). Substrate is bound by residues Gly27–Arg30, Trp31, Arg39, His43, and Ser71–Glu73. Asn74 (proton acceptor) is an active-site residue. Residues Trp75, Arg77, Arg191, and Arg197–Ser199 contribute to the substrate site. Glu210 lines the Mg(2+) pocket. A disordered region spans residues Gly241–Val263. The segment covering Thr243–Val263 has biased composition (polar residues).

It belongs to the UPP synthase family. In terms of assembly, homodimer. The cofactor is Mg(2+).

In terms of biological role, catalyzes the condensation of isopentenyl diphosphate (IPP) with allylic pyrophosphates generating different type of terpenoids. The sequence is that of Isoprenyl transferase from Nitrosomonas europaea (strain ATCC 19718 / CIP 103999 / KCTC 2705 / NBRC 14298).